The sequence spans 379 residues: Lipid-A-disaccharide synthase (379 aa).

The protein belongs to the LpxB family.

It carries out the reaction a lipid X + a UDP-2-N,3-O-bis[(3R)-3-hydroxyacyl]-alpha-D-glucosamine = a lipid A disaccharide + UDP + H(+). The protein operates within bacterial outer membrane biogenesis; LPS lipid A biosynthesis. In terms of biological role, condensation of UDP-2,3-diacylglucosamine and 2,3-diacylglucosamine-1-phosphate to form lipid A disaccharide, a precursor of lipid A, a phosphorylated glycolipid that anchors the lipopolysaccharide to the outer membrane of the cell. The polypeptide is Lipid-A-disaccharide synthase (Persephonella marina (strain DSM 14350 / EX-H1)).